We begin with the raw amino-acid sequence, 357 residues long: Sulfate/thiosulfate import ATP-binding protein CysA (357 aa).

The 235-residue stretch at 3 to 237 (ITIQNLNKHF…PENAFVTEFL (235 aa)) folds into the ABC transporter domain. 35 to 42 (GPSGCGKT) contributes to the ATP binding site.

Belongs to the ABC transporter superfamily. Sulfate/tungstate importer (TC 3.A.1.6) family. As to quaternary structure, the complex is composed of two ATP-binding proteins (CysA), two transmembrane proteins (CysT and CysW) and a solute-binding protein (CysP).

The protein localises to the cell inner membrane. It carries out the reaction sulfate(out) + ATP + H2O = sulfate(in) + ADP + phosphate + H(+). The enzyme catalyses thiosulfate(out) + ATP + H2O = thiosulfate(in) + ADP + phosphate + H(+). In terms of biological role, part of the ABC transporter complex CysAWTP involved in sulfate/thiosulfate import. Responsible for energy coupling to the transport system. In Neisseria meningitidis serogroup B (strain ATCC BAA-335 / MC58), this protein is Sulfate/thiosulfate import ATP-binding protein CysA.